A 448-amino-acid chain; its full sequence is Ribosomal protein uS12 methylthiotransferase RimO (448 aa).

The MTTase N-terminal domain maps to 16 to 126; the sequence is PRISFVSLGC…VVAAVHEAVP (111 aa). [4Fe-4S] cluster contacts are provided by C25, C61, C90, C157, C161, and C164. Positions 143–380 constitute a Radical SAM core domain; it reads LTPRHYAYLK…MEAQSHVSLR (238 aa). A TRAM domain is found at 383-448; that stretch reads RAKVGKRLSV…DAYDLHGIAV (66 aa).

It belongs to the methylthiotransferase family. RimO subfamily. It depends on [4Fe-4S] cluster as a cofactor.

The protein localises to the cytoplasm. The enzyme catalyses L-aspartate(89)-[ribosomal protein uS12]-hydrogen + (sulfur carrier)-SH + AH2 + 2 S-adenosyl-L-methionine = 3-methylsulfanyl-L-aspartate(89)-[ribosomal protein uS12]-hydrogen + (sulfur carrier)-H + 5'-deoxyadenosine + L-methionine + A + S-adenosyl-L-homocysteine + 2 H(+). Catalyzes the methylthiolation of an aspartic acid residue of ribosomal protein uS12. The chain is Ribosomal protein uS12 methylthiotransferase RimO from Methylorubrum extorquens (strain PA1) (Methylobacterium extorquens).